The following is a 301-amino-acid chain: Nucleotide-binding protein Noca_2527 (301 aa).

26–33 is a binding site for ATP; the sequence is GMTGAGRS. Residue 77–80 participates in GTP binding; the sequence is DVRS.

It belongs to the RapZ-like family.

Its function is as follows. Displays ATPase and GTPase activities. This chain is Nucleotide-binding protein Noca_2527, found in Nocardioides sp. (strain ATCC BAA-499 / JS614).